Here is a 6061-residue protein sequence, read N- to C-terminus: Intermembrane lipid transfer protein vps13B (6061 aa).

Residues 2 to 115 form the Chorein N-terminal domain; it reads FESLVADIIA…QLELKRKKLE (114 aa). Disordered regions lie at residues 590–623, 803–828, 1386–1414, 1604–1644, 2747–2784, 2950–2972, 3364–3401, 3855–3876, 4011–4068, 4107–4132, 4262–4297, 4321–4442, 4601–4631, 4753–4797, 4861–4882, 5003–5030, and 5372–5429; these read PKYK…NNNK, DIKN…NNKN, QQQQ…NVSS, SSNN…GTLS, QTNQ…EDQE, GLNN…NSST, LNRN…DDDD, QQQQ…RNKK, QQQQ…FKNN, ELEK…RPDE, NSSN…YNGR, SQSI…TSPG, TSSP…KKSL, NNNN…TQEF, NAGG…SISQ, LATK…DGIE, and NINN…IGQD. The span at 595–614 shows a compositional bias: basic and acidic residues; sequence HQENKENKENQENQENENKN. A compositionally biased stretch (basic and acidic residues) spans 1395–1406; sequence QQQKEEEQHGGE. The segment covering 2747–2756 has biased composition (polar residues); the sequence is QTNQNNQKNR. Residues 2774–2784 show a composition bias toward acidic residues; the sequence is NDNDEYDEDQE. Over residues 3388-3401 the composition is skewed to acidic residues; that stretch reads IDDDDGDGDDDDDD. A compositionally biased stretch (basic and acidic residues) spans 4015 to 4024; sequence QEKEKEIEKE. The segment covering 4031–4040 has biased composition (low complexity); that stretch reads LKNNNNISIN. Positions 4041 to 4057 are enriched in acidic residues; it reads DNDDDDDDDDNDNDENN. Low complexity predominate over residues 4058 to 4068; the sequence is NENYEFNFKNN. Residues 4107 to 4120 show a composition bias toward basic and acidic residues; the sequence is ELEKKKRERKENSK. Composition is skewed to low complexity over residues 4330-4383 and 4399-4429; these read TTTT…VGSN and NNNN…NNNN. Polar residues predominate over residues 4430-4441; that stretch reads SNDNQVNFSTSP. 2 stretches are compositionally biased toward low complexity: residues 4601 to 4617 and 4753 to 4784; these read TSSP…NYNN and NNNN…SNEN. A compositionally biased stretch (polar residues) spans 4785–4794; sequence SQDQPPSIKT. Composition is skewed to low complexity over residues 5013 to 5030 and 5372 to 5384; these read DNSN…DGIE and NINN…NNDN. Residues 5385–5409 show a composition bias toward basic and acidic residues; the sequence is NKNKNNNDKNKNNDKNNKNNNDKNN. Low complexity predominate over residues 5410–5421; it reads NDNNNNNNNNNN.

Belongs to the VPS13 family.

It localises to the membrane. Its function is as follows. Mediates the transfer of lipids between membranes at organelle contact sites. The polypeptide is Intermembrane lipid transfer protein vps13B (vps13B) (Dictyostelium discoideum (Social amoeba)).